The following is a 469-amino-acid chain: Sulfate adenylyltransferase subunit 1 (469 aa).

A tr-type G domain is found at 22–236; the sequence is KDMLRVLTCG…LLNTVSVEQD (215 aa). The segment at 31-38 is G1; it reads GSVDDGKS. A GTP-binding site is contributed by 31–38; that stretch reads GSVDDGKS. Positions 89-93 are G2; that stretch reads GITID. The interval 110–113 is G3; sequence DTPG. Residues 110–114 and 165–168 each bind GTP; these read DTPGH and NKMD. Residues 165-168 form a G4 region; that stretch reads NKMD. The tract at residues 202 to 204 is G5; sequence SAL.

The protein belongs to the TRAFAC class translation factor GTPase superfamily. Classic translation factor GTPase family. CysN/NodQ subfamily. As to quaternary structure, heterodimer composed of CysD, the smaller subunit, and CysN.

The catalysed reaction is sulfate + ATP + H(+) = adenosine 5'-phosphosulfate + diphosphate. The protein operates within sulfur metabolism; hydrogen sulfide biosynthesis; sulfite from sulfate: step 1/3. Its function is as follows. With CysD forms the ATP sulfurylase (ATPS) that catalyzes the adenylation of sulfate producing adenosine 5'-phosphosulfate (APS) and diphosphate, the first enzymatic step in sulfur assimilation pathway. APS synthesis involves the formation of a high-energy phosphoric-sulfuric acid anhydride bond driven by GTP hydrolysis by CysN coupled to ATP hydrolysis by CysD. The protein is Sulfate adenylyltransferase subunit 1 of Shewanella woodyi (strain ATCC 51908 / MS32).